The chain runs to 131 residues: NADH-quinone oxidoreductase subunit I 2 (131 aa).

2 4Fe-4S ferredoxin-type domains span residues 42–71 (LKVS…VEAG) and 81–110 (ERYE…MTGE). Residues C51, C54, C57, C61, C90, C93, C96, and C100 each coordinate [4Fe-4S] cluster.

The protein belongs to the complex I 23 kDa subunit family. In terms of assembly, NDH-1 is composed of 14 different subunits. Subunits NuoA, H, J, K, L, M, N constitute the membrane sector of the complex. It depends on [4Fe-4S] cluster as a cofactor.

It localises to the cell inner membrane. It carries out the reaction a quinone + NADH + 5 H(+)(in) = a quinol + NAD(+) + 4 H(+)(out). Its function is as follows. NDH-1 shuttles electrons from NADH, via FMN and iron-sulfur (Fe-S) centers, to quinones in the respiratory chain. The immediate electron acceptor for the enzyme in this species is believed to be ubiquinone. Couples the redox reaction to proton translocation (for every two electrons transferred, four hydrogen ions are translocated across the cytoplasmic membrane), and thus conserves the redox energy in a proton gradient. This is NADH-quinone oxidoreductase subunit I 2 from Geobacter metallireducens (strain ATCC 53774 / DSM 7210 / GS-15).